Reading from the N-terminus, the 1899-residue chain is Protocadherin-15 (1899 aa).

An N-terminal signal peptide occupies residues 1–26; it reads MLQQFCLWKWLAVGIAVATILASSLA. Residues 27–1376 lie on the Extracellular side of the membrane; sequence QNDEDCKLAR…AQAVGYTEGA (1350 aa). A disulfide bridge connects residues Cys-32 and Cys-120. 11 Cadherin domains span residues 38 to 147, 148 to 265, 278 to 395, 396 to 509, 510 to 616, 617 to 717, 719 to 819, 820 to 926, 927 to 1035, 1037 to 1144, and 1145 to 1259; these read GPPA…SPQF, QQQR…GPMF, RPLT…KPYF, TKST…SPTF, SNIS…PPRF, PQLM…GPVF, MFLP…SPVF, TNAS…SPVF, SKTL…IPRF, QDEY…APVF, and TKKM…PPTL. The chain crosses the membrane as a helical span at residues 1377-1397; it reads LLALAVIIILCCMPAILIVMV. Over 1398-1899 the chain is Cytoplasmic; it reads SYRQRQAECA…KRFPSQSTAL (502 aa). Disordered regions lie at residues 1668–1687, 1700–1721, and 1734–1820; these read SPCLRSSPLSSPTPCEVVEP, HDYPEELSPPPTRKPTPPSFRI, and TKGE…RREL. 2 stretches are compositionally biased toward pro residues: residues 1706–1717 and 1743–1773; these read LSPPPTRKPTPP and PDPPKTPPPPPPLLPPPPPSPPLLPPHPPTL. Positions 1774–1791 are enriched in low complexity; the sequence is PLASVPSSSSLPSTQHLS. Pro residues predominate over residues 1804–1814; the sequence is AVPPPAAVPEP.

In the utricle, localizes to the distal region of the kinocilium and near the tips of the stereocilia.

It localises to the cell membrane. Calcium-dependent cell-adhesion protein. Required for inner ear neuroepithelial cell elaboration and cochlear function. Probably involved in the maintenance of normal retinal function. The polypeptide is Protocadherin-15 (Pcdh15) (Gallus gallus (Chicken)).